The chain runs to 528 residues: MEEKSQVQLDSHIFNTTSSSSQYYPLNVMISRSIKGWRPEPGYPFKCGIEIHTQLKTKHKLFSLSKNSPGAAPNTCASYFDFGLPGTIPKLNPEALLLALRAAVALKSDISSISSFDRKHYFYMDQPLGYQITQHYQPLAKNGHLSLVPRLDDVEEAKTIHVEQIQLEQDTAKLNYNAYDGTVDIDHNRANVPLIEMVTKPDFSHLSELRAFVKKYISLMTHLGVCSGDMENGALRCDVNVSVAGGNRVEIKNLGSTSEIIAAAKYEYARQVQLLKHGKTPVEQETRSWDGTKTIRTRSKEDAIDYRYFPDVELPRIRLHPSIGKDLSQTLPELPEQLIQQLCEEPFLLEVKHARFLVENPDLYNYYKNLHHIIVDKHKLSYKVVNNWIIHEFIGAFNKLDIPVDVSVIDTEKLASLIIMVSEKKISITSAKLLLTQILQSPEDRELSIPDLIDAYDLGAVNDIHGDDLKEAIKEVCSEVIDSHPDVVTKIRNGKTKSINFLIGRAMKETQGKVDSKEFEKMFKKLIG.

The protein belongs to the GatB/GatE family. GatB subfamily. As to quaternary structure, subunit of the heterotrimeric GatFAB amidotransferase (AdT) complex, composed of A, B and F subunits.

The protein localises to the mitochondrion. The enzyme catalyses L-glutamyl-tRNA(Gln) + L-glutamine + ATP + H2O = L-glutaminyl-tRNA(Gln) + L-glutamate + ADP + phosphate + H(+). Its function is as follows. Allows the formation of correctly charged Gln-tRNA(Gln) through the transamidation of misacylated Glu-tRNA(Gln) in the mitochondria. The reaction takes place in the presence of glutamine and ATP through an activated gamma-phospho-Glu-tRNA(Gln). The polypeptide is Glutamyl-tRNA(Gln) amidotransferase subunit B, mitochondrial (Clavispora lusitaniae (strain ATCC 42720) (Yeast)).